We begin with the raw amino-acid sequence, 521 residues long: Glucomannan 4-beta-mannosyltransferase 1 (521 aa).

A helical membrane pass occupies residues 22-42; it reads VIVPLLRLAVAVCLTMSVLLF. The active site involves aspartate 123. Residues aspartate 182 and aspartate 184 each coordinate substrate. Aspartate 276 is an active-site residue. Transmembrane regions (helical) follow at residues 355-375, 391-411, 471-491, and 495-515; these read IIAHIVTFAFYCLIIPATIFV, IITLLNSVGTPRSFHLLFFWI, VTELGVAAFLFSCGWYDLAFG, and FFIYLFFQGAAFFIVGIGYVG.

The protein belongs to the glycosyltransferase 2 family. Plant cellulose synthase-like A subfamily.

The protein localises to the golgi apparatus membrane. It carries out the reaction GDP-mannose + (glucomannan)n = GDP + (glucomannan)n+1.. Functionally, possesses glucomannan synthase and mannan synthase activities in vitro. Mannan synthase consists of a 4-beta-mannosyltransferase activity on mannan using GDP-mannose. The beta-1,4-mannan product is the backbone for galactomannan synthesis by galactomannan galactosyltransferase. Galactomannan is a noncellulosic polysaccharides of plant cell wall. This Oryza sativa subsp. japonica (Rice) protein is Glucomannan 4-beta-mannosyltransferase 1.